The primary structure comprises 707 residues: Choline transporter-like protein 4 (707 aa).

The Cytoplasmic segment spans residues 1-32; the sequence is MGEKQDPDKAYGKPAKYDPSFRGPIRNRSCTD. The helical transmembrane segment at 33–53 threads the bilayer; sequence IICCVLFFVFILGYIAVGLVA. Over 54 to 226 the chain is Extracellular; sequence WVYGDPQQVL…KIFEDFAQSW (173 aa). N-linked (GlcNAc...) asparagine glycosylation is found at Asn-67, Asn-142, Asn-184, and Asn-195. The chain crosses the membrane as a helical span at residues 227–247; the sequence is YWILAALGVALVLSLLFVLLL. The Cytoplasmic portion of the chain corresponds to 248–249; sequence RL. The helical transmembrane segment at 250–270 threads the bilayer; that stretch reads VAGPLVFVLIIGVLGVLAYGI. At 271–306 the chain is on the extracellular side; that stretch reads YHCWNEYRLLRDKGASISQLGFTTNLSAYSSVQETW. Asn-295 carries N-linked (GlcNAc...) asparagine glycosylation. Residues 307 to 327 form a helical membrane-spanning segment; the sequence is LAALILLAVLEGILLLMLIFL. Residues 328 to 355 are Cytoplasmic-facing; that stretch reads RQRIRIAIALLEEASRAVGQMMSTLFYP. Residues 356 to 376 traverse the membrane as a helical segment; the sequence is LVTFVLLLVCIAYWAMTALYL. The Extracellular segment spans residues 377–452; it reads ATSGQPQYVL…GVLGLFWTIN (76 aa). 3 N-linked (GlcNAc...) asparagine glycosylation sites follow: Asn-390, Asn-402, and Asn-413. Residues 453-473 traverse the membrane as a helical segment; the sequence is WVLALGQCVLAGAFASFYWAF. At 474–498 the chain is on the cytoplasmic side; it reads HKPRDIPTFPLSSAFIRTLRYHTGS. Residues 499–519 traverse the membrane as a helical segment; the sequence is LAFGALILTLVQIARAILEYI. Topologically, residues 520–557 are extracellular; that stretch reads DHKLRGAQNPVARCIMCCFKCCLWCLEKFIKFLNRNAY. The helical transmembrane segment at 558–578 threads the bilayer; it reads IMIAIYGKNFCVSAKNAFMLL. At 579 to 594 the chain is on the cytoplasmic side; that stretch reads MRNIVRVVVLDKVTDL. A helical membrane pass occupies residues 595–615; that stretch reads LLFFGKLLVVGGVGVLSFFFF. Residues 616 to 635 are Extracellular-facing; sequence TGRIQGLGKDFESPQLNYYW. A helical transmembrane segment spans residues 636-656; sequence LPIMTSIMGAYVIASGFFSVF. Over 657 to 707 the chain is Cytoplasmic; it reads GMCVDTLFLCFLEDLERNDGSLDRPYYMSKALLKILGKKNEVPSGDKKRKK.

It belongs to the CTL (choline transporter-like) family. N-glycosylated; N-glycosylation of Asn-677 and Asn-390 is required for a proper thiamine pyrophosphate uptake.

It localises to the membrane. The protein localises to the apical cell membrane. It carries out the reaction choline(out) + n H(+)(in) = choline(in) + n H(+)(out). It catalyses the reaction thiamine diphosphate(out) = thiamine diphosphate(in). Its function is as follows. Choline transporter that plays a role in the choline-acetylcholine system and is required to the efferent innervation of hair cells in the olivocochlear bundle for the maintenance of physiological function of outer hair cells and the protection of hair cells from acoustic injury. Also described as a thiamine pyrophosphate transporter in colon, may mediate the absorption of microbiota-generated thiamine pyrophosphate and contribute to host thiamine (vitamin B1) homeostasis. This Sus scrofa (Pig) protein is Choline transporter-like protein 4.